The chain runs to 508 residues: WD repeat-containing protein JIP5 (508 aa).

6 WD repeats span residues 46-94, 105-144, 150-189, 194-234, 252-293, and 344-381; these read LATG…GVET, RHKG…VVKK, GQNV…QTNL, HNGD…EGDF, DQED…LADQ, and SKLD…QLTP. Positions 372-508 are disordered; sequence DSEKSEQLTP…THGIRRFEGL (137 aa). The segment covering 491–508 has biased composition (basic and acidic residues); the sequence is IKPERSMKTHGIRRFEGL.

The protein belongs to the WD repeat WDR55 family.

The protein resides in the nucleus. It localises to the nucleolus. The protein is WD repeat-containing protein JIP5 (JIP5) of Eremothecium gossypii (strain ATCC 10895 / CBS 109.51 / FGSC 9923 / NRRL Y-1056) (Yeast).